Here is a 746-residue protein sequence, read N- to C-terminus: SNF-related serine/threonine-protein kinase (746 aa).

A Protein kinase domain is found at 16–269; that stretch reads YDLDKTLGRG…LEEIESHPWL (254 aa). ATP is bound by residues 22-30 and Lys-45; that span reads LGRGHFAVV. The active-site Proton acceptor is Asp-139. Ser-162 is modified (phosphoserine). At Thr-173 the chain carries Phosphothreonine; by LKB1. One can recognise a UBA domain in the interval 291 to 334; it reads SEEEHNSIIQRMVLGDIADRDAIVEALETNRYNHITATYFLLAE. 5 positions are modified to phosphoserine: Ser-362, Ser-390, Ser-482, Ser-495, and Ser-518. A disordered region spans residues 383-414; it reads SHATVPQSPARAGDSVLNGHRSKGLCDPAKKD. The span at 494–503 shows a compositional bias: acidic residues; that stretch reads ESDDEFDMDE. Residues 494 to 638 form a disordered region; it reads ESDDEFDMDE…SSSSSPASAA (145 aa). Positions 522–532 are enriched in basic residues; it reads VHKRYHRRKSQ. The segment covering 533-542 has biased composition (low complexity); that stretch reads GRGSSCSSSE. Position 534 is an omega-N-methylarginine (Arg-534). A compositionally biased stretch (basic and acidic residues) spans 549 to 558; the sequence is ESRRRLDKDS. 2 stretches are compositionally biased toward gly residues: residues 575–592 and 600–614; these read GSEGDGGGQSKPSGGGGV and QGTGGSGQGGSGGTP. Residues 615–638 are compositionally biased toward low complexity; it reads SGTAGSSRRCAGPDSSSSSPASAA.

It belongs to the protein kinase superfamily. CAMK Ser/Thr protein kinase family. Requires Mg(2+) as cofactor. Autophosphorylated. Phosphorylation on Thr-173 by STK11/LKB1 in complex with STE20-related adapter-alpha (STRADA) pseudo kinase and CAB39. As to expression, ubiquitously expressed in all tissues examined with highest levels in the brain and testis. Strongly expressed in the pyramidal and granule neurons of the hippocampus and also in the cerebellum.

It localises to the nucleus. It carries out the reaction L-seryl-[protein] + ATP = O-phospho-L-seryl-[protein] + ADP + H(+). The enzyme catalyses L-threonyl-[protein] + ATP = O-phospho-L-threonyl-[protein] + ADP + H(+). Activated by phosphorylation on Thr-173. Functionally, may play a role in hematopoietic cell proliferation or differentiation. Potential mediator of neuronal apoptosis. The polypeptide is SNF-related serine/threonine-protein kinase (Rattus norvegicus (Rat)).